The chain runs to 354 residues: Pyruvate dehydrogenase E1 component subunit alpha (354 aa).

Positions 1 to 29 are disordered; it reads MAKATQDSNRPHKADVGSAIPNHDLPPIP.

In terms of assembly, heterodimer of an alpha and a beta chain. The cofactor is thiamine diphosphate.

The enzyme catalyses N(6)-[(R)-lipoyl]-L-lysyl-[protein] + pyruvate + H(+) = N(6)-[(R)-S(8)-acetyldihydrolipoyl]-L-lysyl-[protein] + CO2. In terms of biological role, the pyruvate dehydrogenase complex catalyzes the overall conversion of pyruvate to acetyl-CoA and CO(2). It contains multiple copies of three enzymatic components: pyruvate dehydrogenase (E1), dihydrolipoamide acetyltransferase (E2) and lipoamide dehydrogenase (E3). This is Pyruvate dehydrogenase E1 component subunit alpha (pdhA) from Zymomonas mobilis subsp. mobilis (strain ATCC 31821 / ZM4 / CP4).